The sequence spans 460 residues: Putative E3 ubiquitin-protein ligase RING1b (460 aa).

Residues 1-85 are disordered; that stretch reads MPSLKSFSAA…SQSSSAGELS (85 aa). Basic and acidic residues predominate over residues 21-31; that stretch reads SEAERFNPEAV. Composition is skewed to acidic residues over residues 32–51 and 59–71; these read EKEE…DEED and EAED…EEED. An RING-type zinc finger spans residues 103–143; it reads CSICLGIIRKTRTVMECLHRFCRECIDKSMRLGNNECPTCR. The interval 196–300 is disordered; it reads QVSQRQSKAL…TEQTHQRDSR (105 aa). Basic residues predominate over residues 220-234; it reads RSRRSGGGSRRRRNC. Residues 240–249 are compositionally biased toward acidic residues; sequence DTSEANDDDD. Basic and acidic residues predominate over residues 250 to 265; the sequence is QNKRGKDSSSDEPCER. The span at 276 to 290 shows a compositional bias: low complexity; that stretch reads SSSNANNNDNCAGNG.

Heterodimer with RING1A. Interacts with CLF. Component of the PRC1-like complex, at least composed of RING1A, RING1B and LHP1.

It localises to the nucleus. It catalyses the reaction S-ubiquitinyl-[E2 ubiquitin-conjugating enzyme]-L-cysteine + [acceptor protein]-L-lysine = [E2 ubiquitin-conjugating enzyme]-L-cysteine + N(6)-ubiquitinyl-[acceptor protein]-L-lysine.. The protein operates within protein modification; protein ubiquitination. Putative E3 ubiquitin-protein ligase that mediates monoubiquitination of 'Lys-119' of histone H2A (H2AK119ub), thereby playing a central role in histone code and gene regulation. Its function is as follows. As part of the PRC1-like complex, repress class I KNOX gene expression. PcG PRC1 complex maintains the transcriptionally repressive state of many genes, including Hox genes, throughout development. PcG PRC1 complex acts via chromatin remodeling and modification of histones, rendering chromatin heritably changed in its expressibility. The protein is Putative E3 ubiquitin-protein ligase RING1b (RING1B) of Arabidopsis thaliana (Mouse-ear cress).